A 254-amino-acid chain; its full sequence is uncharacterized protein (254 aa).

Cysteine 71 functions as the Acyl-thioester intermediate in the catalytic mechanism. Catalysis depends on residues histidine 110 and aspartate 125.

It belongs to the arylamine N-acetyltransferase family.

This is an uncharacterized protein from Bacillus subtilis (strain 168).